Reading from the N-terminus, the 560-residue chain is MAKLLSFSDESRGALEKGVNNLANALKVTIGPKGRNVVIEKKFGAPDIVNDGVTIAKEIDLEDPFENIGAKLIEQVASKTKEKAGDGTTTATVLAQFMVQEGLRNTAAGASPIELRRGMEKAVAQIVDDLKKKSKSVSGDAIKQVATVSAGGDEEIGSMIADAIDKVSFDGVITVEESKSLATELDITEGMAFDRGYSSPYFVTDEDRLICEFENPSILITDKKISSIADLIPVLETVQKNGTPLIILAEEVEGEALATLVVNKNRGVLQVAAVRAPSFGERRKAALGDIAVLTGGTLISEDKAMSLEKVQISDLGQARRVTITKDSTTIVANEAQNTELSNRIASIKRELEETDSEYDQEKLNERIAKLAGGVAVIKVGAPTETELKNRKLRIEDALNATRAAIEEGIVAGGGTTLLELSEGLGDLAKKLEGDQKTGVEIIKRALTAPTKQIAINAGFNGDVVVSDIKRLGKGFNAQTGEYEDLLEAGILDASKVIRLALQDAVSIASLLITTEVVIADKPEPPSAPGAEGGDPMGGMGGMGGMGGMGGMGGMGMPGMM.

Residues 29–32 (TIGP), 86–90 (DGTTT), G413, and D492 each bind ATP. Residues 520–542 (DKPEPPSAPGAEGGDPMGGMGGM) are disordered. A compositionally biased stretch (gly residues) spans 530-542 (AEGGDPMGGMGGM).

Belongs to the chaperonin (HSP60) family. In terms of assembly, forms a cylinder of 14 subunits composed of two heptameric rings stacked back-to-back. Interacts with the co-chaperonin GroES.

Its subcellular location is the cytoplasm. The catalysed reaction is ATP + H2O + a folded polypeptide = ADP + phosphate + an unfolded polypeptide.. In terms of biological role, together with its co-chaperonin GroES, plays an essential role in assisting protein folding. The GroEL-GroES system forms a nano-cage that allows encapsulation of the non-native substrate proteins and provides a physical environment optimized to promote and accelerate protein folding. This Prochlorococcus marinus (strain NATL2A) protein is Chaperonin GroEL 2.